We begin with the raw amino-acid sequence, 425 residues long: Adenosine 3'-phospho 5'-phosphosulfate transporter 1 (425 aa).

A run of 9 helical transmembrane segments spans residues 27–47, 102–122, 147–167, 232–252, 263–283, 303–323, 342–360, 365–387, and 391–411; these read FLILLGYSTVATPAAILIYYV, VIILLLFFFSGIQVTLVAMGV, TQFLIFCNRIVALVLSLMILA, YSWFEYGCGCTIAFGASLFLL, ITYTSFSGMILMAGYLLFDAF, MMFGVNFFSAILCAVSLIEQG, VFLLSLSGAIGQIFIYSTI, PIVFAVIMTIRQMLSIVLSTIMY, and LTFLAAIGFMIVFAAIFVDIH.

The protein belongs to the nucleotide-sugar transporter family. SLC35B subfamily.

The protein localises to the golgi apparatus membrane. Its function is as follows. Mediates the transport of adenosine 3'-phospho 5'-phosphosulfate (PAPS), from cytosol into Golgi. PAPS is a universal sulfuryl donor for sulfation events that take place in the Golgi. This chain is Adenosine 3'-phospho 5'-phosphosulfate transporter 1 (pst-1), found in Caenorhabditis elegans.